The primary structure comprises 146 residues: Large ribosomal subunit protein uL15 (146 aa).

The tract at residues M1 to P56 is disordered. Gly residues-rich tracts occupy residues R21 to Q35 and S42 to G52.

Belongs to the universal ribosomal protein uL15 family. Part of the 50S ribosomal subunit.

Its function is as follows. Binds to the 23S rRNA. The polypeptide is Large ribosomal subunit protein uL15 (Clostridium botulinum (strain ATCC 19397 / Type A)).